The chain runs to 85 residues: Cell division topological specificity factor (85 aa).

This sequence belongs to the MinE family.

Its function is as follows. Prevents the cell division inhibition by proteins MinC and MinD at internal division sites while permitting inhibition at polar sites. This ensures cell division at the proper site by restricting the formation of a division septum at the midpoint of the long axis of the cell. This chain is Cell division topological specificity factor, found in Xanthomonas campestris pv. campestris (strain 8004).